We begin with the raw amino-acid sequence, 142 residues long: Large ribosomal subunit protein uL11 (142 aa).

The protein belongs to the universal ribosomal protein uL11 family. As to quaternary structure, part of the ribosomal stalk of the 50S ribosomal subunit. Interacts with L10 and the large rRNA to form the base of the stalk. L10 forms an elongated spine to which L12 dimers bind in a sequential fashion forming a multimeric L10(L12)X complex. In terms of processing, one or more lysine residues are methylated.

In terms of biological role, forms part of the ribosomal stalk which helps the ribosome interact with GTP-bound translation factors. This Citrobacter koseri (strain ATCC BAA-895 / CDC 4225-83 / SGSC4696) protein is Large ribosomal subunit protein uL11.